A 202-amino-acid chain; its full sequence is Thymidine kinase (202 aa).

ATP is bound by residues 16 to 23 (GPMFSGKS) and 99 to 102 (DEVQ). The Proton acceptor role is filled by glutamate 100. 4 residues coordinate Zn(2+): cysteine 156, cysteine 159, cysteine 194, and histidine 197.

It belongs to the thymidine kinase family. Homotetramer.

It is found in the cytoplasm. It catalyses the reaction thymidine + ATP = dTMP + ADP + H(+). This is Thymidine kinase from Deinococcus deserti (strain DSM 17065 / CIP 109153 / LMG 22923 / VCD115).